The sequence spans 691 residues: Elongation factor G (691 aa).

Positions 8–283 (EKQRNIGIMA…AVVQYLPSPL (276 aa)) constitute a tr-type G domain. GTP is bound by residues 17-24 (AHIDAGKT), 81-85 (DTPGH), and 135-138 (NKMD).

It belongs to the TRAFAC class translation factor GTPase superfamily. Classic translation factor GTPase family. EF-G/EF-2 subfamily.

The protein localises to the cytoplasm. Its function is as follows. Catalyzes the GTP-dependent ribosomal translocation step during translation elongation. During this step, the ribosome changes from the pre-translocational (PRE) to the post-translocational (POST) state as the newly formed A-site-bound peptidyl-tRNA and P-site-bound deacylated tRNA move to the P and E sites, respectively. Catalyzes the coordinated movement of the two tRNA molecules, the mRNA and conformational changes in the ribosome. In Lawsonia intracellularis (strain PHE/MN1-00), this protein is Elongation factor G.